A 130-amino-acid polypeptide reads, in one-letter code: Small ribosomal subunit protein uS11 (130 aa).

The protein belongs to the universal ribosomal protein uS11 family. As to quaternary structure, part of the 30S ribosomal subunit. Interacts with proteins S7 and S18. Binds to IF-3.

Its function is as follows. Located on the platform of the 30S subunit, it bridges several disparate RNA helices of the 16S rRNA. Forms part of the Shine-Dalgarno cleft in the 70S ribosome. The polypeptide is Small ribosomal subunit protein uS11 (Nitrobacter hamburgensis (strain DSM 10229 / NCIMB 13809 / X14)).